The following is a 205-amino-acid chain: Large ribosomal subunit protein bL21 (205 aa).

Residues 107-137 (APAKKAAAKKEEAPKADTAPKAAAAPTEEAA) are disordered. Residues 122 to 137 (ADTAPKAAAAPTEEAA) show a composition bias toward low complexity.

The protein belongs to the bacterial ribosomal protein bL21 family. In terms of assembly, part of the 50S ribosomal subunit. Contacts protein L20.

In terms of biological role, this protein binds to 23S rRNA in the presence of protein L20. This is Large ribosomal subunit protein bL21 from Hyphomonas neptunium (strain ATCC 15444).